The sequence spans 613 residues: Zinc metalloproteinase-disintegrin-like MTP8 (613 aa).

Residues 1 to 20 form the signal peptide; it reads MIEVLLVTICFTVFPYQGSP. The propeptide occupies 21–191; it reads IILESGNVND…DETIEKISQL (171 aa). Residues 205 to 401 enclose the Peptidase M12B domain; it reads KYIELYVVVD…VRPQCILNKP (197 aa). E208 is a binding site for Ca(2+). N-linked (GlcNAc...) asparagine glycosylation is present at N282. D292 contacts Ca(2+). 3 disulfides stabilise this stretch: C316–C396, C356–C380, and C358–C363. Positions 341, 345, and 351 each coordinate Zn(2+). Residues C396, N399, N414, F416, E418, E421, and D424 each coordinate Ca(2+). The region spanning 409 to 495 is the Disintegrin domain; the sequence is PPVCGNYFVE…KCPTDSFQRN (87 aa). Cystine bridges form between C412–C441, C423–C436, C425–C431, C435–C458, C449–C455, C454–C480, C467–C487, C474–C506, C499–C511, C518–C568, C533–C575, C543–C577, C546–C556, C563–C601, and C595–C606. An N-linked (GlcNAc...) asparagine glycan is attached at N437. The D/ECD-tripeptide signature appears at 473-475; it reads DCD. Positions 475, 476, 478, and 490 each coordinate Ca(2+). N550 and N572 each carry an N-linked (GlcNAc...) asparagine glycan.

Belongs to the venom metalloproteinase (M12B) family. P-III subfamily. Monomer. It depends on Zn(2+) as a cofactor. Expressed by the venom gland.

The protein localises to the secreted. Functionally, snake venom zinc metalloproteinase that may impair hemostasis in the prey. This chain is Zinc metalloproteinase-disintegrin-like MTP8, found in Drysdalia coronoides (White-lipped snake).